The sequence spans 316 residues: Acetaldehyde dehydrogenase (316 aa).

11–14 is an NAD(+) binding site; that stretch reads SGNI. The active-site Acyl-thioester intermediate is C131. Residues 162 to 170 and N289 contribute to the NAD(+) site; that span reads SAGPGTRAN.

This sequence belongs to the acetaldehyde dehydrogenase family. Interacts with MhpE.

The catalysed reaction is acetaldehyde + NAD(+) + CoA = acetyl-CoA + NADH + H(+). Its pathway is aromatic compound metabolism; 3-phenylpropanoate degradation. In terms of biological role, catalyzes the conversion of acetaldehyde to acetyl-CoA, using NAD(+) and coenzyme A. Is the final enzyme in the meta-cleavage pathway for the degradation of aromatic compounds. The chain is Acetaldehyde dehydrogenase from Escherichia coli O81 (strain ED1a).